The primary structure comprises 569 residues: Arginine--tRNA ligase (569 aa).

The 'HIGH' region motif lies at 123–133 (PNIAKRMHIGH).

It belongs to the class-I aminoacyl-tRNA synthetase family. In terms of assembly, monomer.

It localises to the cytoplasm. The enzyme catalyses tRNA(Arg) + L-arginine + ATP = L-arginyl-tRNA(Arg) + AMP + diphosphate. The chain is Arginine--tRNA ligase from Fusobacterium nucleatum subsp. nucleatum (strain ATCC 25586 / DSM 15643 / BCRC 10681 / CIP 101130 / JCM 8532 / KCTC 2640 / LMG 13131 / VPI 4355).